Reading from the N-terminus, the 405-residue chain is MRIIKPFAILTPQTIIQDKAVAFDKKIEAIDTVENLIKKYPNAAVEHDENSLLLPGFANPHLHLEFSANKATLQYGDFIPWLYSVIRHREDLLPLCDGACLEQTLSSIIQTGTTAIGAISSYGEDLQACIDSALKVVYFNEVIGSNAATADVMYASFLERFHQSKKHENERFKAAVAIHSPYSVHYILAKRALDIAKKYGSLVSVHFMESRAEREWLDKGSGEFAKFFKEFLNQTRPVNDTKSFLELFKELHTLFVHMVWANEEEIQTIASYNAHIIHCPISNRLLGNGVLDLEKIKSIPYAIATDGLSSNYSLNMYEELKAALFVHPNKEATTFAKELIIRATKAGYDALGFEGGEIAVGKDADMQLIDLPEGLTNVEDLYLHVILHTTKPKKVYIQGEEHVRE.

Positions 61 and 63 each coordinate a divalent metal cation. Residues E141, S145, and H179 each contribute to the substrate site. Position 206 (H206) interacts with a divalent metal cation. E209 (proton donor) is an active-site residue. D306 lines the a divalent metal cation pocket.

It belongs to the metallo-dependent hydrolases superfamily. Requires a divalent metal cation as cofactor.

The catalysed reaction is 6-amino-6-deoxyfutalosine + H2O + H(+) = futalosine + NH4(+). It participates in quinol/quinone metabolism; menaquinone biosynthesis. Functionally, catalyzes the deamination of aminodeoxyfutalosine (AFL) into futalosine (FL), a step in the biosynthesis of menaquinone (MK, vitamin K2). To a lesser extent, can also deaminate 5'-methylthioadenosine. The chain is Aminodeoxyfutalosine deaminase from Nitratiruptor sp. (strain SB155-2).